A 124-amino-acid chain; its full sequence is Large ribosomal subunit protein bL12 (124 aa).

Belongs to the bacterial ribosomal protein bL12 family. In terms of assembly, homodimer. Part of the ribosomal stalk of the 50S ribosomal subunit. Forms a multimeric L10(L12)X complex, where L10 forms an elongated spine to which 2 to 4 L12 dimers bind in a sequential fashion. Binds GTP-bound translation factors.

Its function is as follows. Forms part of the ribosomal stalk which helps the ribosome interact with GTP-bound translation factors. Is thus essential for accurate translation. In Nautilia profundicola (strain ATCC BAA-1463 / DSM 18972 / AmH), this protein is Large ribosomal subunit protein bL12.